A 408-amino-acid chain; its full sequence is ATP phosphoribosyltransferase regulatory subunit (408 aa).

This sequence belongs to the class-II aminoacyl-tRNA synthetase family. HisZ subfamily. Heteromultimer composed of HisG and HisZ subunits.

It is found in the cytoplasm. It participates in amino-acid biosynthesis; L-histidine biosynthesis; L-histidine from 5-phospho-alpha-D-ribose 1-diphosphate: step 1/9. In terms of biological role, required for the first step of histidine biosynthesis. May allow the feedback regulation of ATP phosphoribosyltransferase activity by histidine. The polypeptide is ATP phosphoribosyltransferase regulatory subunit (Thermosynechococcus vestitus (strain NIES-2133 / IAM M-273 / BP-1)).